The chain runs to 206 residues: Small ribosomal subunit protein uS4 (206 aa).

One can recognise an S4 RNA-binding domain in the interval cysteine 96 to valine 156.

It belongs to the universal ribosomal protein uS4 family. As to quaternary structure, part of the 30S ribosomal subunit. Contacts protein S5. The interaction surface between S4 and S5 is involved in control of translational fidelity.

Functionally, one of the primary rRNA binding proteins, it binds directly to 16S rRNA where it nucleates assembly of the body of the 30S subunit. With S5 and S12 plays an important role in translational accuracy. The sequence is that of Small ribosomal subunit protein uS4 from Pseudomonas fluorescens (strain SBW25).